The primary structure comprises 255 residues: NADPH-dependent FMN reductase ArsH (255 aa).

43 to 50 (SLRARSFS) provides a ligand contact to FMN.

This sequence belongs to the ArsH family. As to quaternary structure, homotetramer. FMN is required as a cofactor.

Its function is as follows. Has NADPH-dependent FMN reductase activity and very low azoreductase activity. No activity with NADH. In Shigella flexneri, this protein is NADPH-dependent FMN reductase ArsH.